Here is a 348-residue protein sequence, read N- to C-terminus: N-formyl peptide receptor 2 (348 aa).

A glycan (N-linked (GlcNAc...) asparagine) is linked at N1. Residues 1-24 are Extracellular-facing; sequence NFSTPLSEYEEVSYESAGYTVLQI. The chain crosses the membrane as a helical span at residues 25 to 47; that stretch reads LPLVVLGVTFVLGVLGNGLVIWV. At 48-58 the chain is on the cytoplasmic side; sequence AGFRMTRTVTT. A helical transmembrane segment spans residues 59-80; sequence ICYLNLALADFSFTATLPFLIV. Over 81-97 the chain is Extracellular; the sequence is SMAMGEKWPFGWFLCKL. Residues C95 and C173 are joined by a disulfide bond. Residues 98–118 form a helical membrane-spanning segment; the sequence is IHIVVDINLFGSVFLIGFIAL. Topologically, residues 119–137 are cytoplasmic; that stretch reads DRCICVLHPVWAQNHRTVS. The helical transmembrane segment at 138–159 threads the bilayer; it reads LAMKVIVGPWILALVLTLPVFL. At 160 to 202 the chain is on the extracellular side; the sequence is FLTTVTIPNGDTYCTFNFASWGGTPEKRLKVAITMLTARGIIR. Residues 203–223 traverse the membrane as a helical segment; sequence FVIGFSMPMSIVATCYGLIAA. Residues 224–239 are Cytoplasmic-facing; sequence KIHKKGMIKSSRPLRV. The chain crosses the membrane as a helical span at residues 240–263; it reads LTAVVASFFICWFPFQLVALLSTV. Residues 264–283 lie on the Extracellular side of the membrane; that stretch reads WLKEILVDGKYKIINILVNP. Residues 284 to 303 form a helical membrane-spanning segment; sequence TSSLAFFNSCLNPMLYVFVG. The Cytoplasmic segment spans residues 304-348; it reads QDFRERLIHSLPTSLERALSEDSAPTNDTAASCASPPAETELQAM. The tract at residues 322–348 is disordered; the sequence is LSEDSAPTNDTAASCASPPAETELQAM. The span at 326 to 335 shows a compositional bias: polar residues; that stretch reads SAPTNDTAAS.

Belongs to the G-protein coupled receptor 1 family. Interacts with APP; the interaction takes place at the cell surface and the complex is then rapidly internalized.

Its subcellular location is the cell membrane. Its function is as follows. Low affinity receptor for N-formyl-methionyl peptides, which are powerful neutrophil chemotactic factors. Binding of FMLP to the receptor causes activation of neutrophils. This response is mediated via a G-protein that activates a phosphatidylinositol-calcium second messenger system. Receptor for the chemokine-like protein FAM19A5, mediating FAM19A5-stimulated macrophage chemotaxis and the inhibitory effect on TNFSF11/RANKL-induced osteoclast differentiation. In Macaca mulatta (Rhesus macaque), this protein is N-formyl peptide receptor 2 (FPR2).